The primary structure comprises 714 residues: Polyribonucleotide nucleotidyltransferase (714 aa).

Mg(2+)-binding residues include aspartate 487 and aspartate 493. The KH domain maps to 554-613 (PRIEVLQIPTDKIRDVIGTGGKVIREIVEKTGAKINIEDDGTVKVASANGESIRAAIKWI). Positions 623 to 691 (GQIYDGTVVK…DRGKVRLSMK (69 aa)) constitute an S1 motif domain.

The protein belongs to the polyribonucleotide nucleotidyltransferase family. It depends on Mg(2+) as a cofactor.

Its subcellular location is the cytoplasm. The enzyme catalyses RNA(n+1) + phosphate = RNA(n) + a ribonucleoside 5'-diphosphate. Functionally, involved in mRNA degradation. Catalyzes the phosphorolysis of single-stranded polyribonucleotides processively in the 3'- to 5'-direction. This is Polyribonucleotide nucleotidyltransferase from Afipia carboxidovorans (strain ATCC 49405 / DSM 1227 / KCTC 32145 / OM5) (Oligotropha carboxidovorans).